We begin with the raw amino-acid sequence, 104 residues long: Large ribosomal subunit protein uL24 (104 aa).

The protein belongs to the universal ribosomal protein uL24 family. As to quaternary structure, part of the 50S ribosomal subunit.

Functionally, one of two assembly initiator proteins, it binds directly to the 5'-end of the 23S rRNA, where it nucleates assembly of the 50S subunit. In terms of biological role, one of the proteins that surrounds the polypeptide exit tunnel on the outside of the subunit. In Bartonella henselae (strain ATCC 49882 / DSM 28221 / CCUG 30454 / Houston 1) (Rochalimaea henselae), this protein is Large ribosomal subunit protein uL24.